Here is a 403-residue protein sequence, read N- to C-terminus: MDHLEFDENTDSEYSIFEEDNDYGLHGLDDSVGFTDLFDAPNIYRVYSWLHKHYNQKKGQLKHGVSRQKNKLQPIHKQINYETDKLKERLGKSIDKFQEQWNSGKVVRFRDKLSFALGVSTCILTALLVGMAPESMHLWYTIQLFVYLPLRYYTYQRKGYEYFIADFCYWGNILLLVYIWIFPESRRLFILSYSISYGTLAWSVVAWRNSLLFHSIDKITSLFIHFFPPLVLHTIVHLTNKSYLKDRFPAVLKVKKIDLLSSVEIASFFYALWQIWYYFFIQVGKQKQIQEGRPTSFTWLSKAYSKTKLGRAVAKLPQNLQPFVFMIIQYLYSITTMLPCSLWYNNKLYSTAFLALIFGWSVWNGASYYIDVFGRRFQKELEALRQQLAETPTNSGSSSALSR.

At 1 to 112 the chain is on the cytoplasmic side; sequence MDHLEFDENT…SGKVVRFRDK (112 aa). Residues 113–133 traverse the membrane as a helical segment; the sequence is LSFALGVSTCILTALLVGMAP. Residues 134–137 lie on the Lumenal side of the membrane; the sequence is ESMH. A helical transmembrane segment spans residues 138-155; sequence LWYTIQLFVYLPLRYYTY. The Cytoplasmic segment spans residues 156–161; the sequence is QRKGYE. The chain crosses the membrane as a helical span at residues 162–182; sequence YFIADFCYWGNILLLVYIWIF. Residues 183 to 186 are Lumenal-facing; sequence PESR. The chain crosses the membrane as a helical span at residues 187-207; that stretch reads RLFILSYSISYGTLAWSVVAW. Residues 208–218 lie on the Cytoplasmic side of the membrane; sequence RNSLLFHSIDK. A helical membrane pass occupies residues 219–239; that stretch reads ITSLFIHFFPPLVLHTIVHLT. N-linked (GlcNAc...) asparagine glycosylation is present at N240. Residues 240–262 are Lumenal-facing; sequence NKSYLKDRFPAVLKVKKIDLLSS. Residues 263–283 form a helical membrane-spanning segment; it reads VEIASFFYALWQIWYYFFIQV. Residues 284–322 are Cytoplasmic-facing; that stretch reads GKQKQIQEGRPTSFTWLSKAYSKTKLGRAVAKLPQNLQP. Residues 323–343 traverse the membrane as a helical segment; that stretch reads FVFMIIQYLYSITTMLPCSLW. At 344–352 the chain is on the lumenal side; the sequence is YNNKLYSTA. Residues 353–373 form a helical membrane-spanning segment; it reads FLALIFGWSVWNGASYYIDVF. Residues 374 to 403 are Cytoplasmic-facing; it reads GRRFQKELEALRQQLAETPTNSGSSSALSR.

It belongs to the GPC1 family.

It is found in the endoplasmic reticulum membrane. Its subcellular location is the golgi apparatus membrane. It carries out the reaction sn-glycerol 3-phosphocholine + an acyl-CoA = a 1-acyl-sn-glycero-3-phosphocholine + CoA. The enzyme catalyses sn-glycero-3-phosphoethanolamine + an acyl-CoA = a monoacyl-sn-glycero-3-phosphoethanolamine + CoA. It catalyses the reaction sn-glycero-3-phosphoethanolamine + (9Z)-octadecenoyl-CoA = (9Z-octadecenoyl)-sn-glycero-3-phosphoethanolamine + CoA. Its function is as follows. Glycerophosphocholine acyltransferase (GPCAT) that utilizes acyl-CoA to acylate glycero-3-phosphocholine (GPC), forming lysophosphatidylcholine (LPC). Shows broad acyl specificities with a preference for 16:0-CoA, polyunsaturated acyl-CoA, and the hydroxylated ricinoleoyl-CoA. Also catalyzes the acylation of glycero-3-phosphoethanolamine (GPE) with acyl-CoA. In addition to acyl-CoA, GPCAT efficiently utilizes LPC and lysophosphatidylethanolamine (LPE) as acyl donors in the acylation of GPC. Contributes to the maintenance of phosphatidylcholine (PC) homeostasis and might also have specific functions in acyl editing of PC, such as transferring acyl groups modified at the sn-2 position of PC to the sn-1. The sequence is that of Glycerophosphocholine acyltransferase 1 from Schizosaccharomyces pombe (strain 972 / ATCC 24843) (Fission yeast).